The following is a 336-amino-acid chain: Type II methyltransferase M.PvuII (336 aa).

A run of 2 repeats spans residues 11-113 and 181-293. The segment at 196 to 215 is disordered; that stretch reads TPKTRPSGHDIGKSFSKDNG. The segment covering 202–211 has biased composition (basic and acidic residues); the sequence is SGHDIGKSFS.

This sequence belongs to the N(4)/N(6)-methyltransferase family. N(4) subfamily. In terms of assembly, monomer.

It carries out the reaction a 2'-deoxycytidine in DNA + S-adenosyl-L-methionine = an N(4)-methyl-2'-deoxycytidine in DNA + S-adenosyl-L-homocysteine + H(+). Its function is as follows. A beta subtype methylase, recognizes the double-stranded sequence 5'-CAGCTG-3', methylates C-4 on both strands, and protects the DNA from cleavage by the PvuII endonuclease. The chain is Type II methyltransferase M.PvuII from Proteus hauseri.